We begin with the raw amino-acid sequence, 288 residues long: Pyridoxal kinase PdxY (288 aa).

Substrate is bound by residues Ser-12 and 47-48 (TQ). ATP is bound by residues Asp-114, Glu-151, Lys-184, and 211–214 (RPLL). Residue Asp-225 participates in substrate binding.

It belongs to the pyridoxine kinase family. PdxY subfamily. In terms of assembly, homodimer. It depends on Mg(2+) as a cofactor.

The enzyme catalyses pyridoxal + ATP = pyridoxal 5'-phosphate + ADP + H(+). Its pathway is cofactor metabolism; pyridoxal 5'-phosphate salvage; pyridoxal 5'-phosphate from pyridoxal: step 1/1. Functionally, pyridoxal kinase involved in the salvage pathway of pyridoxal 5'-phosphate (PLP). Catalyzes the phosphorylation of pyridoxal to PLP. This Pseudomonas aeruginosa (strain UCBPP-PA14) protein is Pyridoxal kinase PdxY.